A 239-amino-acid chain; its full sequence is Pimeloyl-[acyl-carrier protein] methyl ester esterase (239 aa).

Residues Trp-20, 77–78 (SM), and 138–142 (FISLQ) each bind substrate. The active-site Nucleophile is Ser-77. Catalysis depends on residues Asp-192 and His-220. Residue His-220 participates in substrate binding.

This sequence belongs to the AB hydrolase superfamily. Carboxylesterase BioH family. In terms of assembly, monomer.

It is found in the cytoplasm. The catalysed reaction is 6-carboxyhexanoyl-[ACP] methyl ester + H2O = 6-carboxyhexanoyl-[ACP] + methanol + H(+). The protein operates within cofactor biosynthesis; biotin biosynthesis. Functionally, the physiological role of BioH is to remove the methyl group introduced by BioC when the pimeloyl moiety is complete. It allows to synthesize pimeloyl-ACP via the fatty acid synthetic pathway through the hydrolysis of the ester bonds of pimeloyl-ACP esters. This chain is Pimeloyl-[acyl-carrier protein] methyl ester esterase, found in Legionella pneumophila (strain Corby).